The chain runs to 291 residues: Ribosomal RNA small subunit methyltransferase A (291 aa).

Residues N27, L29, G54, E75, D100, and N125 each coordinate S-adenosyl-L-methionine.

The protein belongs to the class I-like SAM-binding methyltransferase superfamily. rRNA adenine N(6)-methyltransferase family. RsmA subfamily.

The protein localises to the cytoplasm. It catalyses the reaction adenosine(1518)/adenosine(1519) in 16S rRNA + 4 S-adenosyl-L-methionine = N(6)-dimethyladenosine(1518)/N(6)-dimethyladenosine(1519) in 16S rRNA + 4 S-adenosyl-L-homocysteine + 4 H(+). In terms of biological role, specifically dimethylates two adjacent adenosines (A1518 and A1519) in the loop of a conserved hairpin near the 3'-end of 16S rRNA in the 30S particle. May play a critical role in biogenesis of 30S subunits. In Streptococcus mutans serotype c (strain ATCC 700610 / UA159), this protein is Ribosomal RNA small subunit methyltransferase A.